The sequence spans 151 residues: MLP-like protein 328 (151 aa).

This sequence belongs to the MLP family.

The polypeptide is MLP-like protein 328 (MLP328) (Arabidopsis thaliana (Mouse-ear cress)).